The sequence spans 209 residues: Putative 3-methyladenine DNA glycosylase (209 aa).

The protein belongs to the DNA glycosylase MPG family.

The protein is Putative 3-methyladenine DNA glycosylase of Deinococcus geothermalis (strain DSM 11300 / CIP 105573 / AG-3a).